A 254-amino-acid chain; its full sequence is Coproheme decarboxylase (254 aa).

Fe-coproporphyrin III-binding positions include R136, 150–154 (YPMDK), H177, Q190, and S228. Y150 is a catalytic residue.

It belongs to the ChdC family. Type 1 subfamily. Fe-coproporphyrin III serves as cofactor.

It carries out the reaction Fe-coproporphyrin III + 2 H2O2 + 2 H(+) = heme b + 2 CO2 + 4 H2O. The enzyme catalyses Fe-coproporphyrin III + H2O2 + H(+) = harderoheme III + CO2 + 2 H2O. It catalyses the reaction harderoheme III + H2O2 + H(+) = heme b + CO2 + 2 H2O. The protein operates within porphyrin-containing compound metabolism; protoheme biosynthesis. Its function is as follows. Involved in coproporphyrin-dependent heme b biosynthesis. Catalyzes the decarboxylation of Fe-coproporphyrin III (coproheme) to heme b (protoheme IX), the last step of the pathway. The reaction occurs in a stepwise manner with a three-propionate harderoheme intermediate. In Bacillus subtilis (strain 168), this protein is Coproheme decarboxylase.